The primary structure comprises 439 residues: Glutamyl-tRNA reductase (439 aa).

Residues 46-49 (TCNR), Ser111, 116-118 (EGE), and Gln122 contribute to the substrate site. Catalysis depends on Cys47, which acts as the Nucleophile. 191–196 (GTGAYA) contacts NADP(+).

Belongs to the glutamyl-tRNA reductase family. In terms of assembly, homodimer.

It carries out the reaction (S)-4-amino-5-oxopentanoate + tRNA(Glu) + NADP(+) = L-glutamyl-tRNA(Glu) + NADPH + H(+). Its pathway is porphyrin-containing compound metabolism; protoporphyrin-IX biosynthesis; 5-aminolevulinate from L-glutamyl-tRNA(Glu): step 1/2. Its function is as follows. Catalyzes the NADPH-dependent reduction of glutamyl-tRNA(Glu) to glutamate 1-semialdehyde (GSA). This is Glutamyl-tRNA reductase from Clavibacter michiganensis subsp. michiganensis (strain NCPPB 382).